The chain runs to 515 residues: MASMSSGDESLRLCMFDLRRGQTEGQELEKILFFYPADLDFSTQLSVIGLSEGLITFTRLFSPEAACEVIEAERHSHVFYEAEPDIWMVMVVEKNKETGAIWRIDALRRVLKEVHSLFVMFHGSIRALIEKEPTGGLTRSLLYPFITDYLSTFQIWSLSEDCCCEFFVGKKLQLPTFRETLRERGTVQMLTLARDTAVEVQSLVQVLDSCAGSLRCHSMILFQDLLVSTTLSADDTVDLFTFAVMRLTSKALSSDTSSWSYLRKGPGSSEISSRSNLAPVGSIDSLHSRNGNNMHHVIRPLQNDKWTKGKDGFLITDIWGLETGGSPDSAIPTIWLQQTQERMYLLAYQHKSLTLLLLMPTNAIVNGDLSISAVKQQVIEDASLRILKIEENISRGWGGENAYHIKGYRYLVVDNDTKVSRSSPSGKVTTLAKESLLALNKLREEVDSEKSRAKGQEKDMEICIRAKNNVWVIARVTRGKELYMALEKGSDTLLDTTDAVGRFSNRYCSGAFLMD.

This sequence belongs to the CCZ1 family. In terms of assembly, interacts with MON1.

The protein resides in the endosome. It localises to the prevacuolar compartment. In terms of biological role, plays an important role in membrane trafficking through the secretory apparatus. In complex with MON1, acts as a guanine exchange factor (GEF) for RABG3F of the Rab7 protein family. Promotes the exchange of GDP to GTP, converting RABG3F from an inactive GDP-bound form into an active GTP-bound form. The RABG3F active form is involved in protein trafficking from prevacuolar compartments (PVCs) to vacuoles. May serve as a linker between Rab5 and Rab7 protein families in PVCs and mediate PVC maturation. The sequence is that of Vacuolar fusion protein CCZ1 homolog A from Arabidopsis thaliana (Mouse-ear cress).